The primary structure comprises 278 residues: Bicarbonate transport ATP-binding protein CmpD (278 aa).

An ABC transporter domain is found at 21-254 (LIVENVSKIY…RPRDRERIME (234 aa)). Residue 57–64 (GHSGCGKS) participates in ATP binding.

This sequence belongs to the ABC transporter superfamily. Nitrate/nitrite/cyanate uptake transporter (NitT) (TC 3.A.1.16) family. In terms of assembly, the complex is composed of two ATP-binding proteins (CmpC and CmpD), a transmembrane protein (CmpB) and a solute-binding protein (CmpA).

It is found in the cell inner membrane. Part of the ABC transporter complex CmpABCD involved in bicarbonate transport. Responsible for energy coupling to the transport system. The polypeptide is Bicarbonate transport ATP-binding protein CmpD (cmpD) (Synechococcus elongatus (strain ATCC 33912 / PCC 7942 / FACHB-805) (Anacystis nidulans R2)).